Here is a 749-residue protein sequence, read N- to C-terminus: 5-methyltetrahydropteroyltriglutamate--homocysteine methyltransferase (749 aa).

5-methyltetrahydropteroyltri-L-glutamate is bound by residues 15–18 (RELK) and K114. L-homocysteine-binding positions include 425–427 (IGS) and E478. L-methionine-binding positions include 425–427 (IGS) and E478. W555 is a binding site for 5-methyltetrahydropteroyltri-L-glutamate. Residue D593 coordinates L-homocysteine. Position 593 (D593) interacts with L-methionine. Residue E599 participates in 5-methyltetrahydropteroyltri-L-glutamate binding. Residues H636, C638, and E660 each coordinate Zn(2+). The Proton donor role is filled by H689. Position 721 (C721) interacts with Zn(2+).

The protein belongs to the vitamin-B12 independent methionine synthase family. Zn(2+) serves as cofactor.

The catalysed reaction is 5-methyltetrahydropteroyltri-L-glutamate + L-homocysteine = tetrahydropteroyltri-L-glutamate + L-methionine. Its pathway is amino-acid biosynthesis; L-methionine biosynthesis via de novo pathway; L-methionine from L-homocysteine (MetE route): step 1/1. In terms of biological role, catalyzes the transfer of a methyl group from 5-methyltetrahydrofolate to homocysteine resulting in methionine formation. In Streptococcus pneumoniae serotype 19F (strain G54), this protein is 5-methyltetrahydropteroyltriglutamate--homocysteine methyltransferase.